A 148-amino-acid chain; its full sequence is Large ribosomal subunit protein bL9 (148 aa).

The protein belongs to the bacterial ribosomal protein bL9 family.

Binds to the 23S rRNA. This chain is Large ribosomal subunit protein bL9, found in Pseudomonas syringae pv. tomato (strain ATCC BAA-871 / DC3000).